The sequence spans 880 residues: Beta-glucosidase 2 (880 aa).

An N-terminal signal peptide occupies residues 1–17 (MLLILELLVLIIGLGVA). N-linked (GlcNAc...) asparagine glycosylation is found at Asn24, Asn77, and Asn271. Residue Asp299 is part of the active site. Asn336, Asn343, Asn376, Asn548, Asn589, Asn712, Asn743, and Asn794 each carry an N-linked (GlcNAc...) asparagine glycan.

Belongs to the glycosyl hydrolase 3 family.

The enzyme catalyses Hydrolysis of terminal, non-reducing beta-D-glucosyl residues with release of beta-D-glucose.. It functions in the pathway glycan metabolism; cellulose degradation. The chain is Beta-glucosidase 2 (BGL2) from Saccharomycopsis fibuligera (Yeast).